An 882-amino-acid polypeptide reads, in one-letter code: Valine--tRNA ligase (882 aa).

The short motif at 45-55 is the 'HIGH' region element; that stretch reads PNVTGKLHLGH. The 'KMSKS' region signature appears at 519 to 523; sequence KMSKS. Lys-522 contacts ATP. Positions 808-882 form a coiled coil; sequence LADLLNVEEE…RIAEMKKIKS (75 aa).

The protein belongs to the class-I aminoacyl-tRNA synthetase family. ValS type 1 subfamily. Monomer.

It localises to the cytoplasm. It catalyses the reaction tRNA(Val) + L-valine + ATP = L-valyl-tRNA(Val) + AMP + diphosphate. Its function is as follows. Catalyzes the attachment of valine to tRNA(Val). As ValRS can inadvertently accommodate and process structurally similar amino acids such as threonine, to avoid such errors, it has a 'posttransfer' editing activity that hydrolyzes mischarged Thr-tRNA(Val) in a tRNA-dependent manner. The polypeptide is Valine--tRNA ligase (Streptococcus pyogenes serotype M28 (strain MGAS6180)).